The chain runs to 212 residues: Proteasome subunit beta type-2 (212 aa).

Belongs to the peptidase T1B family. In terms of assembly, the 26S proteasome consists of a 20S proteasome core and two 19S regulatory subunits. The 20S proteasome core is composed of 28 subunits that are arranged in four stacked rings, resulting in a barrel-shaped structure. The two end rings are each formed by seven alpha subunits, and the two central rings are each formed by seven beta subunits. The catalytic chamber with the active sites is on the inside of the barrel.

It localises to the cytoplasm. The protein localises to the nucleus. Non-catalytic component of the proteasome, a multicatalytic proteinase complex which is characterized by its ability to cleave peptides with Arg, Phe, Tyr, Leu, and Glu adjacent to the leaving group at neutral or slightly basic pH. The proteasome has an ATP-dependent proteolytic activity. This chain is Proteasome subunit beta type-2 (PBD1), found in Oryza sativa subsp. japonica (Rice).